We begin with the raw amino-acid sequence, 190 residues long: CASP-like protein 1E2 (190 aa).

Residues 1–21 (MEHEGKNNMNGMEMEKGKREL) form a disordered region. Residues 1–28 (MEHEGKNNMNGMEMEKGKRELGSRKGVE) lie on the Cytoplasmic side of the membrane. Residues 29–49 (LTMRVLALILTMAAATVLGVA) form a helical membrane-spanning segment. Residues 50–83 (KQTKVVSIKLIPTLPPLDITTTAKASYLSAFVYN) are Extracellular-facing. The helical transmembrane segment at 84-104 (ISVNAIACGYTAISIAILMIS) threads the bilayer. The Cytoplasmic segment spans residues 105 to 111 (RGRRSKK). The chain crosses the membrane as a helical span at residues 112 to 132 (LLMVVLLGDLVMVALLFSGTG). The Extracellular segment spans residues 133–163 (AASAIGLMGLHGNKHVMWKKVCGVFGKFCHR). Residues 164–184 (AAPSLPLTLLAAVVFMFLVVL) traverse the membrane as a helical segment. Over 185–190 (DAIKLP) the chain is Cytoplasmic.

Belongs to the Casparian strip membrane proteins (CASP) family. In terms of assembly, homodimer and heterodimers.

It localises to the cell membrane. In Arabidopsis thaliana (Mouse-ear cress), this protein is CASP-like protein 1E2.